The following is a 143-amino-acid chain: Period circadian protein (143 aa).

The disordered stretch occupies residues N25–I130. 2 stretches are compositionally biased toward low complexity: residues S71–T93 and G114–A126.

In terms of assembly, forms a heterodimer with timeless (TIM); the complex then translocates into the nucleus. In terms of processing, phosphorylated with a circadian rhythmicity, probably by the double-time protein (dbt). Phosphorylation could be implicated in the stability of per monomer and in the formation of heterodimer per-tim.

The protein resides in the nucleus. It is found in the cytoplasm. Its subcellular location is the perinuclear region. Essential for biological clock functions. Determines the period length of circadian and ultradian rhythms; an increase in PER dosage leads to shortened circadian rhythms and a decrease leads to lengthened circadian rhythms. Essential for the circadian rhythmicity of locomotor activity, eclosion behavior, and for the rhythmic component of the male courtship song that originates in the thoracic nervous system. The biological cycle depends on the rhythmic formation and nuclear localization of the TIM-PER complex. Light induces the degradation of TIM, which promotes elimination of PER. Nuclear activity of the heterodimer coordinatively regulates PER and TIM transcription through a negative feedback loop. Behaves as a negative element in circadian transcriptional loop. Does not appear to bind DNA, suggesting indirect transcriptional inhibition. This is Period circadian protein (per) from Drosophila picticornis (Fruit fly).